The sequence spans 235 residues: MAYTSLTSSPLVSNVSVGGTSKINNNKVSAPCSVFVPSMRRPTTRLVARATGDNKDTSVDVHHSSAQGGNNQGTAVERRPTRMALDVSPFGVLDPMSPMRTMRQMIDTMDRLFEDTMTFPGRNRASGTGEIRTPWDIHDDENEIKMRFDMPGLSKEDVKVSVENDMLVIKGEHKKEEDGRDKHSWGRNYSSYDTRLSLPDNVVKDKIKAELKNGVLFISIPKTEVEKKVIDVQIN.

2 disordered regions span residues 1–23 (MAYT…TSKI) and 51–80 (TGDN…ERRP). The span at 52–63 (GDNKDTSVDVHH) shows a compositional bias: basic and acidic residues. Polar residues predominate over residues 64 to 74 (SSAQGGNNQGT). In terms of domain architecture, sHSP spans 126 to 235 (SGTGEIRTPW…EKKVIDVQIN (110 aa)).

This sequence belongs to the small heat shock protein (HSP20) family. In terms of tissue distribution, in fruits, flowers, leaves, and stems.

It localises to the plastid. The protein localises to the chloroplast. The sequence is that of Small heat shock protein, chloroplastic (HSP21) from Solanum lycopersicum (Tomato).